The sequence spans 410 residues: Translation initiation factor 2 subunit gamma (410 aa).

The 198-residue stretch at 6-203 folds into the tr-type G domain; that stretch reads QSEINIGMVG…AIEDLMPTPE (198 aa). Residues 15 to 22 form a G1 region; the sequence is GHVDHGKT. 4 residues coordinate Mg(2+): aspartate 18, threonine 22, glycine 43, and serine 45. Residue 18–23 participates in GTP binding; the sequence is DHGKTS. Residues 43–47 are G2; the sequence is GISIR. Residues cysteine 58, cysteine 61, cysteine 73, and cysteine 76 each contribute to the Zn(2+) site. Residues 90-93 are G3; the sequence is DAPG. GTP is bound by residues 146–149 and 181–183; these read NKID and SAH. The tract at residues 146–149 is G4; the sequence is NKID. A G5 region spans residues 181–183; the sequence is SAH.

Belongs to the TRAFAC class translation factor GTPase superfamily. Classic translation factor GTPase family. EIF2G subfamily. In terms of assembly, heterotrimer composed of an alpha, a beta and a gamma chain. Mg(2+) is required as a cofactor.

It carries out the reaction GTP + H2O = GDP + phosphate + H(+). In terms of biological role, eIF-2 functions in the early steps of protein synthesis by forming a ternary complex with GTP and initiator tRNA. This chain is Translation initiation factor 2 subunit gamma, found in Methanococcus aeolicus (strain ATCC BAA-1280 / DSM 17508 / OCM 812 / Nankai-3).